The following is a 249-amino-acid chain: Protection of telomeres protein poz1 (249 aa).

In terms of assembly, interacts with pot1, rap1 and tpz1.

Its subcellular location is the cytoplasm. The protein localises to the nucleus. It is found in the chromosome. The protein resides in the telomere. Its function is as follows. Telomeric DNA-binding protein that negatively regulates telomerase and telomere length. This is Protection of telomeres protein poz1 (poz1) from Schizosaccharomyces pombe (strain 972 / ATCC 24843) (Fission yeast).